The primary structure comprises 88 residues: Phosphocarrier protein HPr (88 aa).

An HPr domain is found at 1-88; sequence MVVKTVRVLN…RLFQNKFEEE (88 aa). Catalysis depends on His-15, which acts as the Pros-phosphohistidine intermediate. At Ser-46 the chain carries Phosphoserine; by HPrK/P.

This sequence belongs to the HPr family.

Its subcellular location is the cytoplasm. Phosphorylation on Ser-46 inhibits the phosphoryl transfer from enzyme I to HPr. In terms of biological role, general (non sugar-specific) component of the phosphoenolpyruvate-dependent sugar phosphotransferase system (sugar PTS). This major carbohydrate active-transport system catalyzes the phosphorylation of incoming sugar substrates concomitantly with their translocation across the cell membrane. The phosphoryl group from phosphoenolpyruvate (PEP) is transferred to the phosphoryl carrier protein HPr by enzyme I. Phospho-HPr then transfers it to the PTS EIIA domain. The chain is Phosphocarrier protein HPr (ptsH) from Treponema pallidum (strain Nichols).